Reading from the N-terminus, the 79-residue chain is D-alanyl carrier protein (79 aa).

In terms of domain architecture, Carrier spans 1 to 77; that stretch reads MDVKETILNI…KIISGVVELM (77 aa). S35 is modified (O-(pantetheine 4'-phosphoryl)serine).

It belongs to the DltC family. In terms of processing, 4'-phosphopantetheine is transferred from CoA to a specific serine of apo-DCP.

It localises to the cytoplasm. It functions in the pathway cell wall biogenesis; lipoteichoic acid biosynthesis. Carrier protein involved in the D-alanylation of lipoteichoic acid (LTA). The loading of thioester-linked D-alanine onto DltC is catalyzed by D-alanine--D-alanyl carrier protein ligase DltA. The DltC-carried D-alanyl group is further transferred to cell membrane phosphatidylglycerol (PG) by forming an ester bond, probably catalyzed by DltD. D-alanylation of LTA plays an important role in modulating the properties of the cell wall in Gram-positive bacteria, influencing the net charge of the cell wall. In Streptococcus suis (strain 05ZYH33), this protein is D-alanyl carrier protein.